Reading from the N-terminus, the 144-residue chain is Putative 2'-deoxynucleoside 5'-phosphate N-hydrolase 1 (144 aa).

Substrate is bound by residues 7-13 (YFCGSIR), Tyr-22, His-39, Glu-83, and 107-109 (SGM).

Belongs to the 2'-deoxynucleoside 5'-phosphate N-hydrolase 1 family. As to quaternary structure, monomer and homodimer.

It is found in the cytoplasm. The protein resides in the nucleus. It catalyses the reaction a pyrimidine 2'-deoxyribonucleoside 5'-phosphate + H2O = a pyrimidine nucleobase + 2-deoxy-D-ribose 5-phosphate. The catalysed reaction is a purine 2'-deoxyribonucleoside 5'-phosphate + H2O = a purine nucleobase + 2-deoxy-D-ribose 5-phosphate. Catalyzes the cleavage of the N-glycosidic bond of deoxyribonucleoside 5'-monophosphates to yield deoxyribose 5-phosphate and a purine or pyrimidine base. This chain is Putative 2'-deoxynucleoside 5'-phosphate N-hydrolase 1, found in Trichoplax adhaerens (Trichoplax reptans).